The following is a 562-amino-acid chain: Arginine--tRNA ligase (562 aa).

Residues alanine 129–histidine 139 carry the 'HIGH' region motif.

The protein belongs to the class-I aminoacyl-tRNA synthetase family. Monomer.

It localises to the cytoplasm. The catalysed reaction is tRNA(Arg) + L-arginine + ATP = L-arginyl-tRNA(Arg) + AMP + diphosphate. The sequence is that of Arginine--tRNA ligase (argS) from Xylella fastidiosa (strain 9a5c).